Consider the following 94-residue polypeptide: Large ribosomal subunit protein bL25 (94 aa).

It belongs to the bacterial ribosomal protein bL25 family. In terms of assembly, part of the 50S ribosomal subunit; part of the 5S rRNA/L5/L18/L25 subcomplex. Contacts the 5S rRNA. Binds to the 5S rRNA independently of L5 and L18.

This is one of the proteins that binds to the 5S RNA in the ribosome where it forms part of the central protuberance. The protein is Large ribosomal subunit protein bL25 of Edwardsiella ictaluri (strain 93-146).